The sequence spans 265 residues: uncharacterized protein (265 aa).

The interval 233–265 (STACGSDQRPTRLPRASCSSRSISGSAARPWKR) is disordered. Residues 247-265 (RASCSSRSISGSAARPWKR) are compositionally biased toward low complexity.

This is an uncharacterized protein from Escherichia coli.